The sequence spans 254 residues: 4-hydroxy-tetrahydrodipicolinate reductase (254 aa).

7 to 12 (GASGRI) serves as a coordination point for NAD(+). R35 contacts NADP(+). Residues 91–93 (GTT) and 115–118 (AHNM) each bind NAD(+). H147 (proton donor/acceptor) is an active-site residue. (S)-2,3,4,5-tetrahydrodipicolinate is bound at residue H148. Catalysis depends on K151, which acts as the Proton donor. 157–158 (GT) is a binding site for (S)-2,3,4,5-tetrahydrodipicolinate.

The protein belongs to the DapB family.

It is found in the cytoplasm. The catalysed reaction is (S)-2,3,4,5-tetrahydrodipicolinate + NAD(+) + H2O = (2S,4S)-4-hydroxy-2,3,4,5-tetrahydrodipicolinate + NADH + H(+). It carries out the reaction (S)-2,3,4,5-tetrahydrodipicolinate + NADP(+) + H2O = (2S,4S)-4-hydroxy-2,3,4,5-tetrahydrodipicolinate + NADPH + H(+). Its pathway is amino-acid biosynthesis; L-lysine biosynthesis via DAP pathway; (S)-tetrahydrodipicolinate from L-aspartate: step 4/4. In terms of biological role, catalyzes the conversion of 4-hydroxy-tetrahydrodipicolinate (HTPA) to tetrahydrodipicolinate. This Helicobacter pylori (strain P12) protein is 4-hydroxy-tetrahydrodipicolinate reductase.